A 45-amino-acid polypeptide reads, in one-letter code: Caltrin-like protein 1 (45 aa).

Positions 8–45 (DSDRPNCSRYVQHLYMCTKELDPVCGTDGHTYGNRSIF) constitute a Kazal-like domain. 2 N-linked (GlcNAc...) asparagine glycosylation sites follow: Asn-13 and Asn-41.

In terms of processing, glycosylated.

Its subcellular location is the secreted. Functionally, inhibits calcium transport into spermatozoa. The protein is Caltrin-like protein 1 of Cavia porcellus (Guinea pig).